Consider the following 294-residue polypeptide: Bifunctional protein FolD (294 aa).

NADP(+) contacts are provided by residues 176 to 178 (GAS), Ser201, and Ile242.

The protein belongs to the tetrahydrofolate dehydrogenase/cyclohydrolase family. In terms of assembly, homodimer.

The enzyme catalyses (6R)-5,10-methylene-5,6,7,8-tetrahydrofolate + NADP(+) = (6R)-5,10-methenyltetrahydrofolate + NADPH. It catalyses the reaction (6R)-5,10-methenyltetrahydrofolate + H2O = (6R)-10-formyltetrahydrofolate + H(+). It participates in one-carbon metabolism; tetrahydrofolate interconversion. Functionally, catalyzes the oxidation of 5,10-methylenetetrahydrofolate to 5,10-methenyltetrahydrofolate and then the hydrolysis of 5,10-methenyltetrahydrofolate to 10-formyltetrahydrofolate. This is Bifunctional protein FolD from Bordetella petrii (strain ATCC BAA-461 / DSM 12804 / CCUG 43448).